We begin with the raw amino-acid sequence, 455 residues long: Kynurenine--oxoglutarate transaminase 3 (455 aa).

Gly71 is a substrate binding site. Residue Lys116 is modified to N6-acetyllysine; alternate. Lys116 is subject to N6-succinyllysine; alternate. Asn218 lines the substrate pocket. Position 280 is an N6-(pyridoxal phosphate)lysine (Lys280). Arg430 contributes to the substrate binding site.

It belongs to the class-I pyridoxal-phosphate-dependent aminotransferase family. In terms of assembly, homodimer. Requires pyridoxal 5'-phosphate as cofactor.

It catalyses the reaction L-kynurenine + 2-oxoglutarate = kynurenate + L-glutamate + H2O. The catalysed reaction is L-kynurenine + glyoxylate = kynurenate + glycine + H2O. It carries out the reaction 3-hydroxy-L-kynurenine + glyoxylate = xanthurenate + glycine + H2O. The enzyme catalyses an S-substituted L-cysteine + H2O = a thiol + pyruvate + NH4(+). It participates in amino-acid degradation; L-kynurenine degradation; kynurenate from L-kynurenine: step 1/2. In terms of biological role, catalyzes the irreversible transamination of the L-tryptophan metabolite L-kynurenine to form kynurenic acid (KA), an intermediate in the tryptophan catabolic pathway which is also a broad spectrum antagonist of the three ionotropic excitatory amino acid receptors among others. May catalyze the beta-elimination of S-conjugates and Se-conjugates of L-(seleno)cysteine, resulting in the cleavage of the C-S or C-Se bond. Has transaminase activity towards L-kynurenine, tryptophan, phenylalanine, serine, cysteine, methionine, histidine, glutamine and asparagine with glyoxylate as an amino group acceptor (in vitro). Has lower activity with 2-oxoglutarate as amino group acceptor (in vitro). This is Kynurenine--oxoglutarate transaminase 3 from Bos taurus (Bovine).